The chain runs to 70 residues: Protein SlyX homolog (70 aa).

Belongs to the SlyX family.

The polypeptide is Protein SlyX homolog (Rhizobium meliloti (strain 1021) (Ensifer meliloti)).